Here is a 323-residue protein sequence, read N- to C-terminus: Acetyl-coenzyme A carboxylase carboxyl transferase subunit alpha (323 aa).

Residues 39 to 293 form the CoA carboxyltransferase C-terminal domain; that stretch reads RLSKKSQQLT…RRALADSLRQ (255 aa).

The protein belongs to the AccA family. Acetyl-CoA carboxylase is a heterohexamer composed of biotin carboxyl carrier protein (AccB), biotin carboxylase (AccC) and two subunits each of ACCase subunit alpha (AccA) and ACCase subunit beta (AccD).

Its subcellular location is the cytoplasm. The catalysed reaction is N(6)-carboxybiotinyl-L-lysyl-[protein] + acetyl-CoA = N(6)-biotinyl-L-lysyl-[protein] + malonyl-CoA. Its pathway is lipid metabolism; malonyl-CoA biosynthesis; malonyl-CoA from acetyl-CoA: step 1/1. In terms of biological role, component of the acetyl coenzyme A carboxylase (ACC) complex. First, biotin carboxylase catalyzes the carboxylation of biotin on its carrier protein (BCCP) and then the CO(2) group is transferred by the carboxyltransferase to acetyl-CoA to form malonyl-CoA. This is Acetyl-coenzyme A carboxylase carboxyl transferase subunit alpha from Burkholderia multivorans (strain ATCC 17616 / 249).